Here is a 675-residue protein sequence, read N- to C-terminus: Heat shock 70 kDa protein 12A (675 aa).

Positions 1 to 13 are enriched in basic and acidic residues; that stretch reads MADKEAGGSDGPR. The tract at residues 1 to 45 is disordered; sequence MADKEAGGSDGPRETAPTSAYSSPARSLGDTGITPLSPSHIVNDT. A2 is modified (N-acetylalanine). Composition is skewed to polar residues over residues 16–25 and 34–45; these read APTSAYSSPA and TPLSPSHIVNDT.

Belongs to the heat shock protein 70 family. Interacts with SORL1 (via cytosolic C-terminus); this interaction affects SORL1 internalization and subcellular localization. In terms of tissue distribution, widely expressed with highest levels in brain, kidney and muscle.

The protein localises to the cytoplasm. Its subcellular location is the nucleus. Functionally, adapter protein for SORL1, but not SORT1. Delays SORL1 internalization and affects SORL1 subcellular localization. In Homo sapiens (Human), this protein is Heat shock 70 kDa protein 12A (HSPA12A).